A 111-amino-acid chain; its full sequence is MGKSMEEGIFVKVFPSKAIFVIYKEVEIIVKPDYAGDTIKVKYVFNSDELQKKLVEYFNKFNVPYKEISKNEVEVYYDPMYQLDCFDHMFEKLTMGDTDYIDSILGRLLPI.

An N-terminal signal peptide occupies residues 1 to 18 (MGKSMEEGIFVKVFPSKA).

This is an uncharacterized protein from Acidianus convivator (ATV).